The sequence spans 269 residues: Indole-3-glycerol phosphate synthase (269 aa).

The protein belongs to the TrpC family.

It carries out the reaction 1-(2-carboxyphenylamino)-1-deoxy-D-ribulose 5-phosphate + H(+) = (1S,2R)-1-C-(indol-3-yl)glycerol 3-phosphate + CO2 + H2O. It functions in the pathway amino-acid biosynthesis; L-tryptophan biosynthesis; L-tryptophan from chorismate: step 4/5. This chain is Indole-3-glycerol phosphate synthase, found in Roseiflexus castenholzii (strain DSM 13941 / HLO8).